The primary structure comprises 204 residues: Casparian strip membrane protein 2 (204 aa).

Residues 1 to 42 (MKNESTFIDVPAESSSAMKGKAPLIGVARDHTTSGSGGYNRG) lie on the Cytoplasmic side of the membrane. Residues 43-63 (LAIFDFLLRLAAIVAALAAAA) traverse the membrane as a helical segment. The Extracellular portion of the chain corresponds to 64–92 (TMGTSDETLPFFTQFLQFEASYDDLPTFQ). Residues 93-113 (FFVIAMALVGGYLVLSLPISV) form a helical membrane-spanning segment. Over 114-125 (VTILRPLATAPR) the chain is Cytoplasmic. The chain crosses the membrane as a helical span at residues 126–146 (LLLLVLDTGVLALNTAAASSA). The Extracellular portion of the chain corresponds to 147–178 (AAISYLAHSGNQNTNWLPICQQFGDFCQKSSG). A helical membrane pass occupies residues 179 to 199 (AVVSAFVSVVFFTILVVISGV). The Cytoplasmic portion of the chain corresponds to 200–204 (ALKRH).

Belongs to the Casparian strip membrane proteins (CASP) family. As to quaternary structure, homodimer and heterodimers with other CASP proteins. Interacts with CASP1, CASP3 and CASP4.

It is found in the cell membrane. Regulates membrane-cell wall junctions and localized cell wall deposition. Required for establishment of the Casparian strip membrane domain (CSD) and the subsequent formation of Casparian strips, a cell wall modification of the root endodermis that determines an apoplastic barrier between the intraorganismal apoplasm and the extraorganismal apoplasm and prevents lateral diffusion. The chain is Casparian strip membrane protein 2 (CASP2) from Arabidopsis thaliana (Mouse-ear cress).